We begin with the raw amino-acid sequence, 156 residues long: Small ribosomal subunit protein uS7 (156 aa).

The protein belongs to the universal ribosomal protein uS7 family. In terms of assembly, part of the 30S ribosomal subunit. Contacts proteins S9 and S11.

Functionally, one of the primary rRNA binding proteins, it binds directly to 16S rRNA where it nucleates assembly of the head domain of the 30S subunit. Is located at the subunit interface close to the decoding center, probably blocks exit of the E-site tRNA. The protein is Small ribosomal subunit protein uS7 of Chlorobaculum tepidum (strain ATCC 49652 / DSM 12025 / NBRC 103806 / TLS) (Chlorobium tepidum).